We begin with the raw amino-acid sequence, 349 residues long: 5-deoxyribose 1-phosphate isomerase (349 aa).

Residues 49-51 (RGA), R92, and Q199 each bind substrate. Residue D240 is the Proton donor of the active site. A substrate-binding site is contributed by 250–251 (NK).

It belongs to the EIF-2B alpha/beta/delta subunits family. DrdI subfamily.

The enzyme catalyses 5-deoxy-alpha-D-ribose 1-phosphate = 5-deoxy-D-ribulose 1-phosphate. Its pathway is carbohydrate degradation. Catalyzes the isomerization of 5-deoxy-alpha-D-ribose 1-phosphate to 5-deoxy-D-ribulose 1-phosphate, as part of a 5-deoxyribose salvage pathway that recycles this toxic radical SAM enzyme by-product to mainstream metabolites. This chain is 5-deoxyribose 1-phosphate isomerase, found in Clostridium botulinum (strain Okra / Type B1).